The sequence spans 209 residues: Kinetochore protein Spc25 (209 aa).

A coiled-coil region spans residues 74-107 (TRAVREKLAEERQKNAEMQAQLEKANDERIEQMD).

It belongs to the SPC25 family. Component of the Ndc80 complex, which is composed of Ndc80, Nuf2 and Spc25.

The protein localises to the nucleus. The protein resides in the chromosome. It is found in the centromere. Its subcellular location is the kinetochore. In terms of biological role, acts as a component of the essential kinetochore-associated Ndc80 complex, which is required for chromosome segregation and spindle checkpoint activity during meiosis and mitosis. Required for kinetochore integrity and the organization of stable microtubule binding sites in the outer plate of the kinetochore. Participates in SAC signaling that responds specifically to disruptions in spindle microtubule dynamics. The NDC80 complex synergistically enhances the affinity of the SKA1 complex for microtubules and may allow the NDC80 complex to track depolymerizing microtubules. This chain is Kinetochore protein Spc25, found in Drosophila grimshawi (Hawaiian fruit fly).